A 210-amino-acid chain; its full sequence is Probable GTP-binding protein EngB (210 aa).

One can recognise an EngB-type G domain in the interval glutamine 30–leucine 204. Residues glycine 38–serine 45, glycine 64–leucine 68, aspartate 82–glycine 85, threonine 149–aspartate 152, and leucine 182–alanine 185 contribute to the GTP site. Positions 45 and 66 each coordinate Mg(2+).

Belongs to the TRAFAC class TrmE-Era-EngA-EngB-Septin-like GTPase superfamily. EngB GTPase family. The cofactor is Mg(2+).

Its function is as follows. Necessary for normal cell division and for the maintenance of normal septation. This is Probable GTP-binding protein EngB from Pseudomonas entomophila (strain L48).